The following is a 205-amino-acid chain: Small ribosomal subunit protein uS4c (205 aa).

Residues 93–156 enclose the S4 RNA-binding domain; it reads MRLDNTVFRL…KSRNLVLNNL (64 aa).

It belongs to the universal ribosomal protein uS4 family. In terms of assembly, part of the 30S ribosomal subunit. Contacts protein S5. The interaction surface between S4 and S5 is involved in control of translational fidelity.

It is found in the plastid. The protein resides in the chloroplast. One of the primary rRNA binding proteins, it binds directly to 16S rRNA where it nucleates assembly of the body of the 30S subunit. Functionally, with S5 and S12 plays an important role in translational accuracy. The sequence is that of Small ribosomal subunit protein uS4c (rps4) from Mesostigma viride (Green alga).